The primary structure comprises 135 residues: Small ribosomal subunit protein uS8 (135 aa).

It belongs to the universal ribosomal protein uS8 family. As to quaternary structure, part of the 30S ribosomal subunit. Contacts proteins S5 and S12.

Its function is as follows. One of the primary rRNA binding proteins, it binds directly to 16S rRNA central domain where it helps coordinate assembly of the platform of the 30S subunit. The protein is Small ribosomal subunit protein uS8 of Cutibacterium acnes (strain DSM 16379 / KPA171202) (Propionibacterium acnes).